The primary structure comprises 283 residues: HTH-type transcriptional activator RhaR (283 aa).

The region spanning 179–277 is the HTH araC/xylS-type domain; the sequence is DLLMAALGNS…GVTPRVWRQQ (99 aa). 2 DNA-binding regions (H-T-H motif) span residues 196–217 and 244–267; these read QHFCSHYQIAERPLRQLFRQQT and ISEIAARCGFEDSNYFSVVFTRET.

In terms of assembly, binds DNA as a dimer.

Its subcellular location is the cytoplasm. Functionally, activates expression of the rhaSR operon in response to L-rhamnose. In Cronobacter sakazakii (strain ATCC BAA-894) (Enterobacter sakazakii), this protein is HTH-type transcriptional activator RhaR.